Consider the following 516-residue polypeptide: Prolyl 4-hydroxylase subunit alpha-1 (516 aa).

N97 carries N-linked (GlcNAc...) asparagine glycosylation. Residues 189–222 (VYILDYLSYAVYQQGDLSKAMMLTKRLLELDPEH) form a TPR repeat. N243 is a glycosylation site (N-linked (GlcNAc...) asparagine). Positions 393 to 501 (TAEELQVANY…KWVSNKWLHE (109 aa)) constitute a Fe2OG dioxygenase domain. H411, D413, and H482 together coordinate Fe cation. K492 lines the 2-oxoglutarate pocket.

The protein belongs to the P4HA family. Heterotetramer of two alpha chains and two beta chains (the beta chain is the multi-functional PDI). Requires Fe(2+) as cofactor. L-ascorbate serves as cofactor.

The protein localises to the endoplasmic reticulum lumen. The enzyme catalyses L-prolyl-[collagen] + 2-oxoglutarate + O2 = trans-4-hydroxy-L-prolyl-[collagen] + succinate + CO2. Catalyzes the post-translational formation of 4-hydroxyproline in -Xaa-Pro-Gly- sequences in collagens and other proteins. The chain is Prolyl 4-hydroxylase subunit alpha-1 (P4HA1) from Gallus gallus (Chicken).